The following is a 325-amino-acid chain: tRNA N6-adenosine threonylcarbamoyltransferase (325 aa).

Fe cation is bound by residues His-107 and His-111. Residues 129–133 (LVSGG), Asp-162, Gly-175, and Asn-265 each bind substrate. Asp-293 is a binding site for Fe cation.

The protein belongs to the KAE1 / TsaD family. It depends on Fe(2+) as a cofactor.

It is found in the cytoplasm. The enzyme catalyses L-threonylcarbamoyladenylate + adenosine(37) in tRNA = N(6)-L-threonylcarbamoyladenosine(37) in tRNA + AMP + H(+). Its function is as follows. Required for the formation of a threonylcarbamoyl group on adenosine at position 37 (t(6)A37) in tRNAs that read codons beginning with adenine. Is involved in the transfer of the threonylcarbamoyl moiety of threonylcarbamoyl-AMP (TC-AMP) to the N6 group of A37, together with TsaE and TsaB. TsaD likely plays a direct catalytic role in this reaction. The polypeptide is tRNA N6-adenosine threonylcarbamoyltransferase (Sulfurimonas denitrificans (strain ATCC 33889 / DSM 1251) (Thiomicrospira denitrificans (strain ATCC 33889 / DSM 1251))).